Here is a 223-residue protein sequence, read N- to C-terminus: Peroxynitrite isomerase 1 (223 aa).

Positions 69-75 (GVWRGEG) match the GXWXGXG motif. Lysine 186 and histidine 213 together coordinate heme b.

This sequence belongs to the nitrobindin family. In terms of assembly, homodimer. Heme b is required as a cofactor.

It carries out the reaction peroxynitrite = nitrate. The protein operates within nitrogen metabolism. Functionally, heme-binding protein able to scavenge peroxynitrite and to protect free L-tyrosine against peroxynitrite-mediated nitration, by acting as a peroxynitrite isomerase that converts peroxynitrite to nitrate. Therefore, this protein likely plays a role in peroxynitrite sensing and in the detoxification of reactive nitrogen and oxygen species (RNS and ROS, respectively). Is able to bind nitric oxide (NO) in vitro, but may act as a sensor of peroxynitrite levels in vivo. In Mycobacterium marinum (strain ATCC BAA-535 / M), this protein is Peroxynitrite isomerase 1.